The primary structure comprises 265 residues: uncharacterized protein (265 aa).

Disordered stretches follow at residues 21–53 (TLTHDEQGPGVEPGPCSRGSSIDGLLPSLLGPH) and 78–133 (HAPS…SSVS). The segment covering 90–101 (DDDDDDEDDDDS) has biased composition (acidic residues). Positions 114 to 123 (SSSSSSSPRV) are enriched in low complexity. 137-144 (AILHQGKS) lines the ATP pocket.

This is an uncharacterized protein from Saccharomyces cerevisiae (strain ATCC 204508 / S288c) (Baker's yeast).